A 331-amino-acid polypeptide reads, in one-letter code: tRNA pseudouridine synthase B (331 aa).

Aspartate 51 (nucleophile) is an active-site residue.

Belongs to the pseudouridine synthase TruB family. Type 1 subfamily.

The enzyme catalyses uridine(55) in tRNA = pseudouridine(55) in tRNA. Responsible for synthesis of pseudouridine from uracil-55 in the psi GC loop of transfer RNAs. The polypeptide is tRNA pseudouridine synthase B (Verminephrobacter eiseniae (strain EF01-2)).